Here is a 780-residue protein sequence, read N- to C-terminus: Tripartite terminase subunit 1 (780 aa).

Disordered regions lie at residues 41–66 (RGNA…AGPG), 428–447 (GAGA…GDRV), and 452–483 (GARG…WGDI). The segment covering 52–63 (ASGAGAAASSEA) has biased composition (low complexity). A compositionally biased stretch (gly residues) spans 429–439 (AGAGGPKGGAG). An ATP-binding site is contributed by 691–698 (FASVYRCG).

The protein belongs to the herpesviridae TRM1 protein family. Associates with TRM2 and TRM3 to form the tripartite terminase complex. Interacts with portal protein.

The protein localises to the host nucleus. Its function is as follows. Component of the molecular motor that translocates viral genomic DNA in empty capsid during DNA packaging. Forms a tripartite terminase complex together with TRM2 and TRM3 in the host cytoplasm. Once the complex reaches the host nucleus, it interacts with the capsid portal vertex. This portal forms a ring in which genomic DNA is translocated into the capsid. TRM1 carries an endonuclease activity that plays an important role for the cleavage of concatemeric viral DNA into unit length genomes. This chain is Tripartite terminase subunit 1, found in Homo sapiens (Human).